The following is a 249-amino-acid chain: Elongation factor Ts (249 aa).

The involved in Mg(2+) ion dislocation from EF-Tu stretch occupies residues 82–85 (TDFV). A disordered region spans residues 215–249 (QAGQLAPEAESTTETADATSETTTEKSSAKKKKKK). Low complexity predominate over residues 222-236 (EAESTTETADATSET).

The protein belongs to the EF-Ts family.

It is found in the cytoplasm. Functionally, associates with the EF-Tu.GDP complex and induces the exchange of GDP to GTP. It remains bound to the aminoacyl-tRNA.EF-Tu.GTP complex up to the GTP hydrolysis stage on the ribosome. The chain is Elongation factor Ts from Rippkaea orientalis (strain PCC 8801 / RF-1) (Cyanothece sp. (strain PCC 8801)).